The sequence spans 155 residues: DNA gyrase inhibitor (155 aa).

The protein belongs to the DNA gyrase inhibitor family. In terms of assembly, interacts with DNA gyrase.

The protein resides in the cytoplasm. Functionally, inhibits the supercoiling activity of DNA gyrase. Acts by inhibiting DNA gyrase at an early step, prior to (or at the step of) binding of DNA by the gyrase. It protects cells against toxins that target DNA gyrase, by inhibiting activity of these toxins and reducing the formation of lethal double-strand breaks in the cell. In Edwardsiella piscicida, this protein is DNA gyrase inhibitor.